The following is a 199-amino-acid chain: Ribosomal RNA large subunit methyltransferase E (199 aa).

Residues glycine 53, tryptophan 55, aspartate 73, aspartate 92, and aspartate 114 each contribute to the S-adenosyl-L-methionine site. Lysine 154 acts as the Proton acceptor in catalysis.

This sequence belongs to the class I-like SAM-binding methyltransferase superfamily. RNA methyltransferase RlmE family.

Its subcellular location is the cytoplasm. The catalysed reaction is uridine(2552) in 23S rRNA + S-adenosyl-L-methionine = 2'-O-methyluridine(2552) in 23S rRNA + S-adenosyl-L-homocysteine + H(+). Its function is as follows. Specifically methylates the uridine in position 2552 of 23S rRNA at the 2'-O position of the ribose in the fully assembled 50S ribosomal subunit. The protein is Ribosomal RNA large subunit methyltransferase E of Treponema denticola (strain ATCC 35405 / DSM 14222 / CIP 103919 / JCM 8153 / KCTC 15104).